A 241-amino-acid polypeptide reads, in one-letter code: MIIIPAIDLFDNCAVRLFKGNYKEKKIYSSEPWKLAEGFAKNGATLLHLVDLNGARNQLGINEDSILKIRKTTSLKVQLGGGIRDKEKLAYYDKIGIDRFILGTAAVTDPDLLKFALDNYEKERVVVAVDAIDGIVKIAGWEKDSGVRYRDLMDRLAKAGIEHIVFTDIAQDGTLAGPNLKAYQEILNSYPFQVIASGGISSLKDLMDLSSLKTKIPLYGVITGKALYEGKLDLAKAISSI.

The active-site Proton acceptor is the D8. The active-site Proton donor is D130.

It belongs to the HisA/HisF family.

Its subcellular location is the cytoplasm. It catalyses the reaction 1-(5-phospho-beta-D-ribosyl)-5-[(5-phospho-beta-D-ribosylamino)methylideneamino]imidazole-4-carboxamide = 5-[(5-phospho-1-deoxy-D-ribulos-1-ylimino)methylamino]-1-(5-phospho-beta-D-ribosyl)imidazole-4-carboxamide. The protein operates within amino-acid biosynthesis; L-histidine biosynthesis; L-histidine from 5-phospho-alpha-D-ribose 1-diphosphate: step 4/9. This Leptospira borgpetersenii serovar Hardjo-bovis (strain L550) protein is 1-(5-phosphoribosyl)-5-[(5-phosphoribosylamino)methylideneamino] imidazole-4-carboxamide isomerase.